We begin with the raw amino-acid sequence, 493 residues long: Neuronal pentraxin receptor (493 aa).

Residues 1–2 (MK) lie on the Cytoplasmic side of the membrane. Residues 3–23 (FLAVLLAAGMLAFLGAVICII) traverse the membrane as a helical; Signal-anchor for type II membrane protein segment. Topologically, residues 24 to 493 (ASVPLAASPA…FDVCKGRAKA (470 aa)) are extracellular. Residues 37–72 (PGGTDNASAASAAGGSGPQRSLSALHSAGGSAGPSV) form a disordered region. Asn-42 carries an N-linked (GlcNAc...) asparagine glycan. A compositionally biased stretch (low complexity) spans 57 to 72 (SLSALHSAGGSAGPSV). An N-linked (GlcNAc...) asparagine glycan is attached at Asn-211. Positions 285 to 487 (DAFKVSIPIR…GAKKAAFDVC (203 aa)) constitute a Pentraxin (PTX) domain. A disulfide bridge connects residues Cys-315 and Cys-376. Asn-340, Glu-418, Gln-419, Asp-420, and Gln-430 together coordinate Ca(2+). An N-linked (GlcNAc...) asparagine glycan is attached at Asn-456.

As to quaternary structure, heteropentamer with NPTX1 and/or NPTX2. Also binds taipoxin-associated calcium-binding protein 49 (TCBP49/RCN2). Interacts with KLHL2. The cofactor is Ca(2+). In terms of processing, ubiquitinated by a cullin-RING-based BCR (BTB-CUL3-RBX1) E3 ubiquitin-protein ligase complex containing KLHL2.

It is found in the membrane. Its function is as follows. May be involved in mediating uptake of synaptic material during synapse remodeling or in mediating the synaptic clustering of AMPA glutamate receptors at a subset of excitatory synapses. This is Neuronal pentraxin receptor (Nptxr) from Mus musculus (Mouse).